The sequence spans 259 residues: MQKPVPKKRLGQNFLKDRKIAEKIVENIDLKNKEIIEIGCGTGFLTNFLLEKAKFVTCYEIDKNLIPILEKKFKNKNLRIINEDFLLAEFESKEKKTIIANLPYYITSKILFKIFANFEKFDKIILMVQNEVADRIVAKPKTPTYSKLSLASQYIAKVRKLFVVGPDSFFPKPKVNSAVVSFDFRANLDAKEMENFFWFTKRCFQFKRKTLYNNLIFFLNKQQIEKIYNFFQFAQNIRPQQLDLVTYIRLADFYFNNIF.

S-adenosyl-L-methionine is bound by residues Asn13, Leu15, Gly39, Glu60, Asp84, and Asn101.

It belongs to the class I-like SAM-binding methyltransferase superfamily. rRNA adenine N(6)-methyltransferase family. RsmA subfamily.

The protein resides in the cytoplasm. The enzyme catalyses adenosine(1518)/adenosine(1519) in 16S rRNA + 4 S-adenosyl-L-methionine = N(6)-dimethyladenosine(1518)/N(6)-dimethyladenosine(1519) in 16S rRNA + 4 S-adenosyl-L-homocysteine + 4 H(+). Its function is as follows. Specifically dimethylates two adjacent adenosines (A1518 and A1519) in the loop of a conserved hairpin near the 3'-end of 16S rRNA in the 30S particle. May play a critical role in biogenesis of 30S subunits. In Mesomycoplasma hyopneumoniae (strain 232) (Mycoplasma hyopneumoniae), this protein is Ribosomal RNA small subunit methyltransferase A.